The primary structure comprises 504 residues: uncharacterized protein (504 aa).

Disordered stretches follow at residues 1–59 (MSSS…KNEY) and 171–255 (GVNS…NQRL). Basic and acidic residues-rich tracts occupy residues 36 to 50 (KPIDKEKEKEKKEIG) and 199 to 212 (RAETPKGRKTESRQ). The span at 213 to 232 (SNRGNNDNGDQRMTSKATTR) shows a compositional bias: polar residues.

This is an uncharacterized protein from Caenorhabditis elegans.